A 66-amino-acid polypeptide reads, in one-letter code: Large ribosomal subunit protein bL33c (66 aa).

This sequence belongs to the bacterial ribosomal protein bL33 family.

It is found in the plastid. Its subcellular location is the chloroplast. This is Large ribosomal subunit protein bL33c from Platanus occidentalis (Sycamore).